Here is a 126-residue protein sequence, read N- to C-terminus: Large ribosomal subunit protein bL12 (126 aa).

Belongs to the bacterial ribosomal protein bL12 family. In terms of assembly, homodimer. Part of the ribosomal stalk of the 50S ribosomal subunit. Forms a multimeric L10(L12)X complex, where L10 forms an elongated spine to which 2 to 4 L12 dimers bind in a sequential fashion. Binds GTP-bound translation factors.

Forms part of the ribosomal stalk which helps the ribosome interact with GTP-bound translation factors. Is thus essential for accurate translation. The sequence is that of Large ribosomal subunit protein bL12 from Corynebacterium diphtheriae (strain ATCC 700971 / NCTC 13129 / Biotype gravis).